The primary structure comprises 159 residues: UPF0262 protein TM1040_3562 (159 aa).

A disordered region spans residues 1–21; it reads MSRISQIELDDRNLPPPTPEI.

Belongs to the UPF0262 family.

The sequence is that of UPF0262 protein TM1040_3562 from Ruegeria sp. (strain TM1040) (Silicibacter sp.).